The primary structure comprises 92 residues: Long neurotoxin 469 (92 aa).

Positions 1-21 (MKTLLLTLVVVTIVCLDLGDS) are cleaved as a signal peptide. 5 cysteine pairs are disulfide-bonded: cysteine 24–cysteine 41, cysteine 34–cysteine 62, cysteine 47–cysteine 51, cysteine 66–cysteine 77, and cysteine 78–cysteine 83.

Belongs to the three-finger toxin family. Long-chain subfamily. Type II alpha-neurotoxin sub-subfamily. Expressed by the venom gland.

The protein localises to the secreted. Binds with high affinity to muscular (alpha-1/CHRNA1) and neuronal (alpha-7/CHRNA7) nicotinic acetylcholine receptor (nAChR) and inhibits acetylcholine from binding to the receptor, thereby impairing neuromuscular and neuronal transmission. The sequence is that of Long neurotoxin 469 from Drysdalia coronoides (White-lipped snake).